Here is a 74-residue protein sequence, read N- to C-terminus: Omwaprin-b (74 aa).

A signal peptide spans 1–24 (MSSGGLLLLLGLLTLWEVLTPVSS). The 45-residue stretch at 27–71 (RPKKPGLCPPRPQKPCVKECKNDWSCPGQQKCCNYGCIDECRDPI) folds into the WAP domain. Intrachain disulfides connect Cys-34–Cys-59, Cys-42–Cys-63, Cys-46–Cys-58, and Cys-52–Cys-67.

It belongs to the venom waprin family. In terms of tissue distribution, expressed by the venom gland.

The protein resides in the secreted. Damages membranes of susceptible bacteria. Has antibacterial activity against the Gram-positive bacteria B.megaterium and S.warneri. After 45 minutes of treatment with this protein, B.megaterium have no visible pili and are smooth. Has no antibacterial activity against the Gram-positive bacteria B.thuringiensis, S.aureus, S.clavuligerus and B. anthracis, or the Gram-negative bacteria E.coli and A.tumefaciens. Has no hemolytic activity. Does not inhibit the proteinases elastase and cathepsin G. Is not toxic to mice. This Oxyuranus microlepidotus (Inland taipan) protein is Omwaprin-b.